The sequence spans 68 residues: Large ribosomal subunit protein bL31 (68 aa).

Zn(2+) is bound by residues Cys17, Cys19, Cys37, and Cys40.

It belongs to the bacterial ribosomal protein bL31 family. Type A subfamily. In terms of assembly, part of the 50S ribosomal subunit. It depends on Zn(2+) as a cofactor.

In terms of biological role, binds the 23S rRNA. This Clostridium perfringens (strain ATCC 13124 / DSM 756 / JCM 1290 / NCIMB 6125 / NCTC 8237 / Type A) protein is Large ribosomal subunit protein bL31.